Reading from the N-terminus, the 513-residue chain is ATP synthase subunit alpha (513 aa).

169-176 (GDRQTGKT) serves as a coordination point for ATP.

The protein belongs to the ATPase alpha/beta chains family. In terms of assembly, F-type ATPases have 2 components, CF(1) - the catalytic core - and CF(0) - the membrane proton channel. CF(1) has five subunits: alpha(3), beta(3), gamma(1), delta(1), epsilon(1). CF(0) has three main subunits: a(1), b(2) and c(9-12). The alpha and beta chains form an alternating ring which encloses part of the gamma chain. CF(1) is attached to CF(0) by a central stalk formed by the gamma and epsilon chains, while a peripheral stalk is formed by the delta and b chains.

It localises to the cell inner membrane. It carries out the reaction ATP + H2O + 4 H(+)(in) = ADP + phosphate + 5 H(+)(out). Functionally, produces ATP from ADP in the presence of a proton gradient across the membrane. The alpha chain is a regulatory subunit. This chain is ATP synthase subunit alpha, found in Proteus mirabilis (strain HI4320).